The following is a 262-amino-acid chain: Pyridoxine 5'-phosphate synthase (262 aa).

Asparagine 6 provides a ligand contact to 3-amino-2-oxopropyl phosphate. 8–9 provides a ligand contact to 1-deoxy-D-xylulose 5-phosphate; that stretch reads DH. Arginine 17 contributes to the 3-amino-2-oxopropyl phosphate binding site. Histidine 41 functions as the Proton acceptor in the catalytic mechanism. 2 residues coordinate 1-deoxy-D-xylulose 5-phosphate: arginine 43 and histidine 48. Residue glutamate 68 is the Proton acceptor of the active site. Threonine 98 contributes to the 1-deoxy-D-xylulose 5-phosphate binding site. Catalysis depends on histidine 210, which acts as the Proton donor. 3-amino-2-oxopropyl phosphate is bound by residues glycine 211 and 232–233; that span reads GQ.

This sequence belongs to the PNP synthase family. In terms of assembly, homooctamer; tetramer of dimers.

The protein localises to the cytoplasm. The catalysed reaction is 3-amino-2-oxopropyl phosphate + 1-deoxy-D-xylulose 5-phosphate = pyridoxine 5'-phosphate + phosphate + 2 H2O + H(+). It functions in the pathway cofactor biosynthesis; pyridoxine 5'-phosphate biosynthesis; pyridoxine 5'-phosphate from D-erythrose 4-phosphate: step 5/5. Catalyzes the complicated ring closure reaction between the two acyclic compounds 1-deoxy-D-xylulose-5-phosphate (DXP) and 3-amino-2-oxopropyl phosphate (1-amino-acetone-3-phosphate or AAP) to form pyridoxine 5'-phosphate (PNP) and inorganic phosphate. The protein is Pyridoxine 5'-phosphate synthase of Campylobacter jejuni subsp. jejuni serotype O:23/36 (strain 81-176).